The following is a 291-amino-acid chain: Pyridoxal 5'-phosphate synthase subunit PdxS (291 aa).

A D-ribose 5-phosphate-binding site is contributed by Asp23. Catalysis depends on Lys80, which acts as the Schiff-base intermediate with D-ribose 5-phosphate. Position 152 (Gly152) interacts with D-ribose 5-phosphate. Arg164 lines the D-glyceraldehyde 3-phosphate pocket. D-ribose 5-phosphate is bound by residues Gly213 and 234-235 (GS).

This sequence belongs to the PdxS/SNZ family. As to quaternary structure, in the presence of PdxT, forms a dodecamer of heterodimers.

The enzyme catalyses aldehydo-D-ribose 5-phosphate + D-glyceraldehyde 3-phosphate + L-glutamine = pyridoxal 5'-phosphate + L-glutamate + phosphate + 3 H2O + H(+). It participates in cofactor biosynthesis; pyridoxal 5'-phosphate biosynthesis. In terms of biological role, catalyzes the formation of pyridoxal 5'-phosphate from ribose 5-phosphate (RBP), glyceraldehyde 3-phosphate (G3P) and ammonia. The ammonia is provided by the PdxT subunit. Can also use ribulose 5-phosphate and dihydroxyacetone phosphate as substrates, resulting from enzyme-catalyzed isomerization of RBP and G3P, respectively. The protein is Pyridoxal 5'-phosphate synthase subunit PdxS of Streptococcus pneumoniae (strain P1031).